A 295-amino-acid chain; its full sequence is Microcin B17-processing protein McbB (295 aa).

The protein resides in the cytoplasm. In terms of biological role, necessary to process the inactive microcin B17 (McbA) precursor into the active peptide. In Escherichia coli, this protein is Microcin B17-processing protein McbB (mcbB).